The following is a 316-amino-acid chain: Methionyl-tRNA formyltransferase (316 aa).

111-114 contacts (6S)-5,6,7,8-tetrahydrofolate; it reads SLLP.

Belongs to the Fmt family.

It catalyses the reaction L-methionyl-tRNA(fMet) + (6R)-10-formyltetrahydrofolate = N-formyl-L-methionyl-tRNA(fMet) + (6S)-5,6,7,8-tetrahydrofolate + H(+). Functionally, attaches a formyl group to the free amino group of methionyl-tRNA(fMet). The formyl group appears to play a dual role in the initiator identity of N-formylmethionyl-tRNA by promoting its recognition by IF2 and preventing the misappropriation of this tRNA by the elongation apparatus. The protein is Methionyl-tRNA formyltransferase of Limosilactobacillus fermentum (strain NBRC 3956 / LMG 18251) (Lactobacillus fermentum).